A 442-amino-acid polypeptide reads, in one-letter code: tRNA-2-methylthio-N(6)-dimethylallyladenosine synthase (442 aa).

The MTTase N-terminal domain occupies 2–117; it reads QGLYIKSYGC…LPELIIKARR (116 aa). [4Fe-4S] cluster-binding residues include Cys-11, Cys-47, Cys-80, Cys-157, Cys-161, and Cys-164. In terms of domain architecture, Radical SAM core spans 143–374; that stretch reads KNQEVSAFIS…QELLREQQLA (232 aa). Residues 377–442 enclose the TRAM domain; the sequence is RNMIGQTCSV…QNSVTGIVVN (66 aa).

The protein belongs to the methylthiotransferase family. MiaB subfamily. As to quaternary structure, monomer. Requires [4Fe-4S] cluster as cofactor.

The protein localises to the cytoplasm. It catalyses the reaction N(6)-dimethylallyladenosine(37) in tRNA + (sulfur carrier)-SH + AH2 + 2 S-adenosyl-L-methionine = 2-methylsulfanyl-N(6)-dimethylallyladenosine(37) in tRNA + (sulfur carrier)-H + 5'-deoxyadenosine + L-methionine + A + S-adenosyl-L-homocysteine + 2 H(+). Its function is as follows. Catalyzes the methylthiolation of N6-(dimethylallyl)adenosine (i(6)A), leading to the formation of 2-methylthio-N6-(dimethylallyl)adenosine (ms(2)i(6)A) at position 37 in tRNAs that read codons beginning with uridine. The protein is tRNA-2-methylthio-N(6)-dimethylallyladenosine synthase of Ehrlichia chaffeensis (strain ATCC CRL-10679 / Arkansas).